Here is a 336-residue protein sequence, read N- to C-terminus: Telomere-binding protein cav (336 aa).

The required for binding to Su(var)205 stretch occupies residues 107 to 328; sequence RKKMVQPYPE…TITFQNSESE (222 aa). 2 disordered regions span residues 137-158 and 199-218; these read RLDR…SPAR and SSDL…SEFQ. Short sequence motifs (su(var)205-binding Pro-containing repeat) lie at residues 225–231 and 289–295; these read PETAINE and PETEMNE. Over residues 308–327 the composition is skewed to polar residues; it reads MSIGPSIDSEGTITFQNSES. The interval 308–336 is disordered; that stretch reads MSIGPSIDSEGTITFQNSESEPIDVDSIA.

In terms of assembly, interacts (via C-terminus) with Su(var)205 dimer (via hinge and chromoshadow domain) and with moi to form the terminin, telomere-capping, complex. Interacts with HP6, which is also part of the terminin complex.

Its subcellular location is the nucleus. It is found in the chromosome. The protein localises to the telomere. Its function is as follows. Binds to chromosome ends in a sequence-dependent manner and is required for telomere capping. The chain is Telomere-binding protein cav from Drosophila sechellia (Fruit fly).